Consider the following 284-residue polypeptide: 3-oxoadipate:acetyl-CoA acetyltransferase (284 aa).

Positions 47, 49, and 229 each coordinate Zn(2+).

It belongs to the BKACE family. It depends on Zn(2+) as a cofactor.

The catalysed reaction is 3-oxoadipate + acetyl-CoA = acetoacetate + succinyl-CoA. Catalyzes the condensation of 3-oxoadipate (beta-ketoadipate) and acetyl-CoA, forming acetoacetate and succinyl-CoA. Is likely involved is the degradation of 3-oxoadipate through an alternative pathway, within catechol degradation. This Cupriavidus necator (strain ATCC 17699 / DSM 428 / KCTC 22496 / NCIMB 10442 / H16 / Stanier 337) (Ralstonia eutropha) protein is 3-oxoadipate:acetyl-CoA acetyltransferase.